A 165-amino-acid chain; its full sequence is Peptide methionine sulfoxide reductase MsrA (165 aa).

Residue Cys10 is part of the active site.

It belongs to the MsrA Met sulfoxide reductase family.

It catalyses the reaction L-methionyl-[protein] + [thioredoxin]-disulfide + H2O = L-methionyl-(S)-S-oxide-[protein] + [thioredoxin]-dithiol. It carries out the reaction [thioredoxin]-disulfide + L-methionine + H2O = L-methionine (S)-S-oxide + [thioredoxin]-dithiol. Functionally, has an important function as a repair enzyme for proteins that have been inactivated by oxidation. Catalyzes the reversible oxidation-reduction of methionine sulfoxide in proteins to methionine. The sequence is that of Peptide methionine sulfoxide reductase MsrA from Campylobacter jejuni subsp. jejuni serotype O:6 (strain 81116 / NCTC 11828).